The following is a 523-amino-acid chain: MSGKRKRVVLTIKDKLDIIKKLEDGGSSKQLAVIYGIGETTVRDIRKNKEKIITYASSSDSTSLLAKRKSMKPSMYEELDKAMLEWFNQQRAKGNPISGPICAKRAEFFFYALGMDGDFNPSAGWLTRFKQRHSIREINIRNERLNGDETAVEDFCNNFRDFIEQENLQPEQIYNADETGLFWKCLPSRTTVIKGKCTVPGHNLGEERITVMCCTNATGLHKLKLCVVGKARKPRSFKSTDTLNLPVSYFSQKGAWMDLSIFRQWFDKIFVPQVREYLRSKGLQEKAVLLLDNSPTHPNENVLRSDDGQIFAKYLPPNVASLIQPLGQGVIAAMKRNYRAGLLHNNLEEGNDLKSFWKKLTLLDALYEIAMAWNLVKPVTISRAWKQILPAIEEKEGLDFDEDISGATVATILQHTKGLENVTPENLEKWLEIDSTEPGYEVLTDSEIIRRAQGQTDESSENDEERIELIPEKHINHTTALQWTENLLDYLEQQGDMILPDRLVIRKLRATIRNKQKMTNPGQ.

Positions 1-52 (MSGKRKRVVLTIKDKLDIIKKLEDGGSSKQLAVIYGIGETTVRDIRKNKEKI) constitute an HTH psq-type domain. 2 consecutive DNA-binding regions (H-T-H motif) follow at residues 28 to 48 (SKQLAVIYGIGETTVRDIRKN) and 100 to 132 (PICAKRAEFFFYALGMDGDFNPSAGWLTRFKQR). Residues 67 to 139 (KRKSMKPSMY…KQRHSIREIN (73 aa)) enclose the HTH CENPB-type domain. In terms of domain architecture, DDE-1 spans 168 to 385 (LQPEQIYNAD…VKPVTISRAW (218 aa)).

Belongs to the tigger transposable element derived protein family.

The protein resides in the nucleus. This Mus musculus (Mouse) protein is Jerky protein homolog-like (Jrkl).